A 260-amino-acid polypeptide reads, in one-letter code: (+)-borneol dehydrogenase 1 (260 aa).

NAD(+) contacts are provided by residues G20–G26, D44, D67–V68, and N94–G96. Catalysis depends on S148, which acts as the Proton donor. 3 residues coordinate NAD(+): Y161, K165, and T196. Y161 (proton acceptor) is an active-site residue. Residue K165 is the Proton donor/acceptor of the active site.

The protein belongs to the short-chain dehydrogenases/reductases (SDR) family.

It carries out the reaction (1R,2S,4R)-borneol + NAD(+) = (1R,4R)-camphor + NADH + H(+). Involved in the biosynthesis of monoterpene natural products related to camphor. Catalayzes the oxidation of (+)-borneol to (+)-camphor. Shows absolute selectivity towards (+)-borneol. Catalyzes the oxidation of (+)-isoborneol to (-)-camphor. Shows absolute selectivity towards (+)-isoborneol. This chain is (+)-borneol dehydrogenase 1, found in Salvia officinalis (Sage).